The chain runs to 414 residues: uncharacterized protein (414 aa).

The Lumenal portion of the chain corresponds to 1 to 66 (MNPSVPKVMK…LQRISKDYLK (66 aa)). The interval 20-51 (SKEMNDTSLQLPSTTRSLSPKESNSNEDFNVD) is disordered. Residues 25-51 (DTSLQLPSTTRSLSPKESNSNEDFNVD) show a composition bias toward polar residues. Lys40 participates in a covalent cross-link: Glycyl lysine isopeptide (Lys-Gly) (interchain with G-Cter in ubiquitin). The chain crosses the membrane as a helical span at residues 67-87 (PNIGLVLLTVSYFFNSAMVVS). The 138-residue stretch at 78 to 215 (YFFNSAMVVS…SLLGVVLIVR (138 aa)) folds into the EamA 1 domain. Residues 88 to 106 (TKVLENDPDDIANDRQIKP) lie on the Cytoplasmic side of the membrane. Residues 107–127 (LQILLVRMVITYIGTLIYMYI) traverse the membrane as a helical segment. Residues 128-144 (NKSTISDVPFGKPEVRK) are Lumenal-facing. Residues 145 to 167 (WLVLRGCTGFFGVFGMYYSLMYL) form a helical membrane-spanning segment. Residues 168-171 (TISD) are Cytoplasmic-facing. A helical membrane pass occupies residues 172–191 (AVLITFLAPSLTIFLSWVIL). Residues 192–199 (RERFTKVE) are Lumenal-facing. Residues 200–220 (ALGSLISLLGVVLIVRPSFLF) traverse the membrane as a helical segment. Residues 221–241 (GTPELTDSSSQIVESSDPKSR) lie on the Cytoplasmic side of the membrane. Residues 242-262 (LIATLVGLWGVLGMSCVYIII) form a helical membrane-spanning segment. The 127-residue stretch at 253 to 379 (LGMSCVYIII…IISATLWVIR (127 aa)) folds into the EamA 2 domain. At 263–269 (RYIGKRA) the chain is on the lumenal side. Residues 270–290 (HAIMSVSYFSLITAIVSFIGI) form a helical membrane-spanning segment. The Cytoplasmic segment spans residues 291–307 (NTIPSMKFQIPHSKKQW). Residues 308–328 (ILFGNLGVSGFIFQLLLTMGI) form a helical membrane-spanning segment. The Lumenal segment spans residues 329 to 357 (QRERAGRGSLMTYTQLLYAVFWDVALYKH). The chain crosses the membrane as a helical span at residues 358-378 (WPNIWSWIGMIIIISATLWVI). Residues 379–414 (RIRAANNETTAKDLTPIIDDEENSIPLTEFDLSDSK) are Cytoplasmic-facing.

The protein to yeast YPL264c.

Its subcellular location is the membrane. This is an uncharacterized protein from Saccharomyces cerevisiae (strain ATCC 204508 / S288c) (Baker's yeast).